We begin with the raw amino-acid sequence, 365 residues long: Patr class I histocompatibility antigen, A-126 alpha chain (365 aa).

An N-terminal signal peptide occupies residues 1–24 (MAVMAPRTLVLLLSGALALTQTWA). The tract at residues 25 to 114 (GSHSMRYFST…LRGYYNQSED (90 aa)) is alpha-1. Over 25–308 (GSHSMRYFST…EPSSQPTIPI (284 aa)) the chain is Extracellular. Asparagine 110 is a glycosylation site (N-linked (GlcNAc...) asparagine). An alpha-2 region spans residues 115 to 206 (GSHTIQLMFG…ENGKETLQRT (92 aa)). Cystine bridges form between cysteine 125-cysteine 188 and cysteine 227-cysteine 283. An alpha-3 region spans residues 207-298 (DPPKTHMTHH…GLPKPLTLRW (92 aa)). The 87-residue stretch at 209–295 (PKTHMTHHPI…QHEGLPKPLT (87 aa)) folds into the Ig-like C1-type domain. The tract at residues 299–308 (EPSSQPTIPI) is connecting peptide. A helical transmembrane segment spans residues 309-332 (VGIIAGLVLLGAVITGAVVAAVMW). Topologically, residues 333-365 (RRKSSDRKGGSYSQAASSDSAQGSDVSLTACKV) are cytoplasmic. The tract at residues 338 to 365 (DRKGGSYSQAASSDSAQGSDVSLTACKV) is disordered. A compositionally biased stretch (low complexity) spans 342-359 (GSYSQAASSDSAQGSDVS). The residue at position 343 (serine 343) is a Phosphoserine. Tyrosine 344 is subject to Phosphotyrosine. A phosphoserine mark is found at serine 345, serine 349, serine 352, serine 356, and serine 359.

The protein belongs to the MHC class I family. As to quaternary structure, heterodimer of an alpha chain and a beta chain (beta-2-microglobulin).

The protein localises to the membrane. Its function is as follows. Involved in the presentation of foreign antigens to the immune system. The sequence is that of Patr class I histocompatibility antigen, A-126 alpha chain (Patr-A) from Pan troglodytes (Chimpanzee).